The primary structure comprises 74 residues: Conotoxin AbVIL (74 aa).

The N-terminal stretch at 1–17 (VLIIAVLFLTACQLTTA) is a signal peptide. The tract at residues 17-41 (AETSSRGEQKHRAPRSTDKNSRMTK) is disordered. The propeptide occupies 18–40 (ETSSRGEQKHRAPRSTDKNSRMT). Over residues 21–37 (SRGEQKHRAPRSTDKNS) the composition is skewed to basic and acidic residues. 3 disulfide bridges follow: Cys43–Cys57, Cys50–Cys61, and Cys56–Cys68.

Belongs to the conotoxin O1 superfamily. Expressed by the venom duct.

It localises to the secreted. The polypeptide is Conotoxin AbVIL (Conus abbreviatus (Abbreviated cone)).